Consider the following 241-residue polypeptide: Uridylate kinase (241 aa).

Residue 15–18 participates in ATP binding; the sequence is KLSG. Positions 23-28 are involved in allosteric activation by GTP; that stretch reads GSEGFG. A UMP-binding site is contributed by G57. Residues G58 and R62 each contribute to the ATP site. UMP-binding positions include D77 and 138 to 145; that span reads TGNPFCTT. ATP-binding residues include T165, Y171, and D174.

This sequence belongs to the UMP kinase family. Homohexamer.

The protein localises to the cytoplasm. The catalysed reaction is UMP + ATP = UDP + ADP. It participates in pyrimidine metabolism; CTP biosynthesis via de novo pathway; UDP from UMP (UMPK route): step 1/1. With respect to regulation, allosterically activated by GTP. Inhibited by UTP. In terms of biological role, catalyzes the reversible phosphorylation of UMP to UDP. This chain is Uridylate kinase, found in Shewanella amazonensis (strain ATCC BAA-1098 / SB2B).